Consider the following 299-residue polypeptide: tRNA dimethylallyltransferase (299 aa).

Residue 13 to 20 participates in ATP binding; sequence GPTASGKT. 15-20 is a binding site for substrate; it reads TASGKT. The interaction with substrate tRNA stretch occupies residues 38–41; sequence DSRQ.

This sequence belongs to the IPP transferase family. In terms of assembly, monomer. Mg(2+) serves as cofactor.

The enzyme catalyses adenosine(37) in tRNA + dimethylallyl diphosphate = N(6)-dimethylallyladenosine(37) in tRNA + diphosphate. Functionally, catalyzes the transfer of a dimethylallyl group onto the adenine at position 37 in tRNAs that read codons beginning with uridine, leading to the formation of N6-(dimethylallyl)adenosine (i(6)A). The sequence is that of tRNA dimethylallyltransferase from Prochlorococcus marinus (strain MIT 9515).